We begin with the raw amino-acid sequence, 508 residues long: Phenylacetaldehyde synthase (508 aa).

Residues His-203 and His-318 each coordinate L-phenylalanine. An N6-(pyridoxal phosphate)lysine modification is found at Lys-319. An L-phenylalanine-binding site is contributed by Phe-348.

The protein belongs to the group II decarboxylase family. Homotetramer. It depends on pyridoxal 5'-phosphate as a cofactor.

It catalyses the reaction L-phenylalanine + O2 + H2O + H(+) = 2-phenylacetaldehyde + H2O2 + NH4(+) + CO2. Functionally, bifunctional enzyme that catalyzes the decarboxylation of L-phenylalanine to produce 2-phenylethylamine, which is then oxidized to form 2-phenylacetaldehyde, a constituent of floral scent in petals. 2-phenylacetaldehyde is a precursor of 2-phenylethanol, another constituent of floral scent in petals. This is Phenylacetaldehyde synthase from Rosa hybrid cultivar.